A 627-amino-acid chain; its full sequence is KSKICQRLDSFPVNRFNIADNTPPTLDFKPFRGKLLNASESGPVSAEKQLELRLCDLILDIEDRIYQGTLGAVKVPDRQLWRSALENNTLELLNDEAKENGSSKPINHEMEEMEIDIKQSAKDRLLGLKNDTPSATSTSTNTPQPVNNAVRYLARALHQIEQGVERKYLKAPLGDASESGRVQRTVLDRCGESLLSSGSFSQIFLHLSTLDRSILWSRSILNARCKVCRKKGDGESMVLCDGCDRGHHIYCVRPKLKYVPEGDWFCPECHPKQRSHRLPSRHRYSMDSDEEEEEELDQKEEEEEEEEQEELSESENEQEDEMSEEESPPKRGRAKVQLPLKMRGGKATGKLGPKPKTGKQSTPKNTQPAPEGRGQGKKTRSAPSLEPTSRLSASDSPAHGVSPNSSLVNVVTVNGRGRGKGKGRGRGRGRLQKSADNTPASSPFAFRPFSLDSNEPTPPGRKPRSQSLLPSQAEPKGKGKKRLSGDISSLEQGNRRSSGRHHGVHELSACEQLVVELVRHDDSWPFMRLVSKNQVPDYFDVIQRPIALNLIREKVNKCEYKCASEFIDDVHLMWSNCFEYNHHNSNEAKAGIRLQSFFITEAQNLGLEVSPNNRAPAKTPPAKRSRF.

The segment at Asn-222–Lys-272 adopts a PHD-type zinc-finger fold. Residues His-270–Gly-503 form a disordered region. The span at Lys-272–Arg-283 shows a compositional bias: basic residues. Residues Arg-281–Ser-327 are a coiled coil. Residues Asp-287–Glu-326 are compositionally biased toward acidic residues. Residues Thr-348–Lys-359 are compositionally biased toward low complexity. Polar residues-rich tracts occupy residues Glu-386–Asp-395 and Ser-402–Thr-412. Positions Gly-417–Leu-431 are enriched in basic residues. Positions Asp-486–Arg-496 are enriched in polar residues. A Bromo domain is found at His-502 to Leu-605.

The protein belongs to the WAL family. Together with p18 and p20 proteins, it forms the Xenopus version of CHRAC. In terms of processing, phosphorylated in mitosis.

The protein localises to the nucleus. Functionally, regulatory subunit of a chromatin remodeling complex, which forms ordered nucleosome arrays on chromatin and slides edge- and center-positioned histone octamers away from their original location on the DNA template to facilitate access to DNA during DNA-templated processes such as DNA replication, transcription, and repair. Involved in regulating the spacing of nucleosomes along the chromatin and have the ability to slide mononucleosomes to the center of a DNA template in an ATP-dependent manner. May play a role in transcriptional regulation. In Xenopus laevis (African clawed frog), this protein is Bromodomain adjacent to zinc finger domain protein 1A (baz1a).